The chain runs to 52 residues: Proteinase inhibitor PSI-1.2 (52 aa).

4 disulfide bridges follow: C3/C32, C7/C28, C16/C38, and C31/C49.

In terms of biological role, potent inhibitor of trypsin and a weaker inhibitor of chymotrypsin. It does not inhibit elastase and subtilisin DY. This is Proteinase inhibitor PSI-1.2 from Capsicum annuum (Capsicum pepper).